The primary structure comprises 207 residues: Macrophage immunometabolism regulator (207 aa).

M1 bears the N-acetylmethionine mark. A disordered region spans residues 1–41 (MEVDVNGESRSALTTLPLPVAEASSPGKAEAEKPRCSSTPC). Phosphoserine is present on residues S25, S140, and S167.

The protein belongs to the UNC119-binding protein family. In terms of assembly, interacts with UNC119 and UNC119B; interaction preferentially takes place when UNC119 and UNC119B are unliganded with myristoylated proteins.

It is found in the cytoplasm. The protein resides in the cell projection. It localises to the cilium. In terms of biological role, regulates the macrophage function, by enhancing the resolution of inflammation and wound repair functions mediated by M2 macrophages. The regulation of macrophage function is, due at least in part, to its ability to inhibit glycolysis. May play also a role in trafficking of proteins via its interaction with UNC119 and UNC119B cargo adapters: may help the release of UNC119 and UNC119B cargo or the recycling of UNC119 and UNC119B. May play a role in ciliary membrane localization via its interaction with UNC119B and protein transport into photoreceptor cells. The chain is Macrophage immunometabolism regulator (MACIR) from Bos taurus (Bovine).